Reading from the N-terminus, the 3333-residue chain is MAAAARPRGRALGPVLPPTPLLLLVLRVLPACGATARDPGAAAGLSLHPTYFNLAEAARIWATATCGERGPGEGRPQPELYCKLVGGPTAPGSGHTIQGQFCDYCNSEDPRKAHPVTNAIDGSERWWQSPPLSSGTQYNRVNLTLDLGQLFHVAYILIKFANSPRPDLWVLERSVDFGSTYSPWQYFAHSKVDCLKEFGREANMAVTRDDDVLCVTEYSRIVPLENGEVVVSLINGRPGAKNFTFSHTLREFTKATNIRLRFLRTNTLLGHLISKAQRDPTVTRRYYYSIKDISIGGQCVCNGHAEVCNINNPEKLFRCECQHHTCGETCDRCCTGYNQRRWRPAAWEQSHECEACNCHGHASNCYYDPDVERQQASLNTQGIYAGGGVCINCQHNTAGVNCEQCAKGYYRPYGVPVDAPDGCIPCSCDPEHADGCEQGSGRCHCKPNFHGDNCEKCAIGYYNFPFCLRIPIFPVSTPSSEDPVAGDIKGCDCNLEGVLPEICDAHGRCLCRPGVEGPRCDTCRSGFYSFPICQACWCSALGSYQMPCSSVTGQCECRPGVTGQRCDRCLSGAYDFPHCQGSSSACDPAGTINSNLGYCQCKLHVEGPTCSRCKLLYWNLDKENPSGCSECKCHKAGTVSGTGECRQGDGDCHCKSHVGGDSCDTCEDGYFALEKSNYFGCQGCQCDIGGALSSMCSGPSGVCQCREHVVGKVCQRPENNYYFPDLHHMKYEIEDGSTPNGRDLRFGFDPLAFPEFSWRGYAQMTSVQNDVRITLNVGKSSGSLFRVILRYVNPGTEAVSGHITIYPSWGAAQSKEIIFLPSKEPAFVTVPGNGFADPFSITPGIWVACIKAEGVLLDYLVLLPRDYYEASVLQLPVTEPCAYAGPPQENCLLYQHLPVTRFPCTLACEARHFLLDGEPRPVAVRQPTPAHPVMVDLSGREVELHLRLRIPQVGHYVVVVEYSTEAAQLFVVDVNVKSSGSVLAGQVNIYSCNYSVLCRSAVIDHMSRIAMYELLADADIQLKGHMARFLLHQVCIIPIEEFSAEYVRPQVHCIASYGRFVNQSATCVSLAHETPPTALILDVLSGRPFPHLPQQSSPSVDVLPGVTLKAPQNQVTLRGRVPHLGRYVFVIHFYQAAHPTFPAQVSVDGGWPRAGSFHASFCPHVLGCRDQVIAEGQIEFDISEPEVAATVKVPEGKSLVLVRVLVVPAENYDYQILHKKSMDKSLEFITNCGKNSFYLDPQTASRFCKNSARSLVAFYHKGALPCECHPTGATGPHCSPEGGQCPCQPNVIGRQCTRCATGHYGFPRCKPCSCGRRLCEEMTGQCRCPPRTVRPQCEVCETHSFSFHPMAGCEGCNCSRRGTIEAAMPECDRDSGQCRCKPRITGRQCDRCASGFYRFPECVPCNCNRDGTEPGVCDPGTGACLCKENVEGTECNVCREGSFHLDPANLKGCTSCFCFGVNNQCHSSHKRRTKFVDMLGWHLETADRVDIPVSFNPGSNSMVADLQELPATIHSASWVAPTSYLGDKVSSYGGYLTYQAKSFGLPGDMVLLEKKPDVQLTGQHMSIIYEETNTPRPDRLHHGRVHVVEGNFRHASSRAPVSREELMTVLSRLADVRIQGLYFTETQRLTLSEVGLEEASDTGSGRIALAVEICACPPAYAGDSCQGCSPGYYRDHKGLYTGRCVPCNCNGHSNQCQDGSGICVNCQHNTAGEHCERCQEGYYGNAVHGSCRACPCPHTNSFATGCVVNGGDVRCSCKAGYTGTQCERCAPGYFGNPQKFGGSCQPCSCNSNGQLGSCHPLTGDCINQEPKDSSPAEECDDCDSCVMTLLNDLATMGEQLRLVKSQLQGLSASAGLLEQMRHMETQAKDLRNQLLNYRSAISNHGSKIEGLERELTDLNQEFETLQEKAQVNSRKAQTLNNNVNRATQSAKELDVKIKNVIRNVHILLKQISGTDGEGNNVPSGDFSREWAEAQRMMRELRNRNFGKHLREAEADKRESQLLLNRIRTWQKTHQGENNGLANSIRDSLNEYEAKLSDLRARLQEAAAQAKQANGLNQENERALGAIQRQVKEINSLQSDFTKYLTTADSSLLQTNIALQLMEKSQKEYEKLAASLNEARQELSDKVRELSRSAGKTSLVEEAEKHARSLQELAKQLEEIKRNASGDELVRCAVDAATAYENILNAIKAAEDAANRAASASESALQTVIKEDLPRKAKTLSSNSDKLLNEAKMTQKKLKQEVSPALNNLQQTLNIVTVQKEVIDTNLTTLRDGLHGIQRGDIDAMISSAKSMVRKANDITDEVLDGLNPIQTDVERIKDTYGRTQNEDFKKALTDADNSVNKLTNKLPDLWRKIESINQQLLPLGNISDNMDRIRELIQQARDAASKVAVPMRFNGKSGVEVRLPNDLEDLKGYTSLSLFLQRPNSRENGGTENMFVMYLGNKDASRDYIGMAVVDGQLTCVYNLGDREAELQVDQILTKSETKEAVMDRVKFQRIYQFARLNYTKGATSSKPETPGVYDMDGRNSNTLLNLDPENVVFYVGGYPPDFKLPSRLSFPPYKGCIELDDLNENVLSLYNFKKTFNLNTTEVEPCRRRKEESDKNYFEGTGYARVPTQPHAPIPTFGQTIQTTVDRGLLFFAENGDRFISLNIEDGKLMVRYKLNSELPKERGVGDAINNGRDHSIQIKIGKLQKRMWINVDVQNTIIDGEVFDFSTYYLGGIPIAIRERFNISTPAFRGCMKNLKKTSGVVRLNDTVGVTKKCSEDWKLVRSASFSRGGQLSFTDLGLPPTDHLQASFGFQTFQPSGILLDHQTWTRNLQVTLEDGYIELSTSDSGGPIFKSPQTYMDGLLHYVSVISDNSGLRLLIDDQLLRNSKRLKHISSSRQSLRLGGSNFEGCISNVFVQRLSLSPEVLDLTSNSLKRDVSLGGCSLNKPPFLMLLKGSTRFNKTKTFRINQLLQDTPVASPRSVKVWQDACSPLPKTQANHGALQFGDIPTSHLLFKLPQELLKPRSQFAVDMQTTSSRGLVFHTGTKNSFMALYLSKGRLVFALGTDGKKLRIKSKEKCNDGKWHTVVFGHDGEKGRLVVDGLRAREGSLPGNSTISIRAPVYLGSPPSGKPKSLPTNSFVGCLKNFQLDSKPLYTPSSSFGVSSCLGGPLEKGIYFSEEGGHVVLAHSVLLGPEFKLVFSIRPRSLTGILIHIGSQPGKHLCVYLEAGKVTASMDSGAGGTSTSVTPKQSLCDGQWHSVAVTIKQHILHLELDTDSSYTAGQIPFPPASTQEPLHLGGAPANLTTLRIPVWKSFFGCLRNIHVNHIPVPVTEALEVQGPVSLNGCPDQ.

Residues 1–35 (MAAAARPRGRALGPVLPPTPLLLLVLRVLPACGAT) form the signal peptide. A Laminin N-terminal domain is found at 43 to 298 (AGLSLHPTYF…SIKDISIGGQ (256 aa)). N-linked (GlcNAc...) asparagine glycosylation is found at Asn-142 and Asn-242. The interval 298-728 (QCVCNGHAEV…NNYYFPDLHH (431 aa)) is domain V. Intrachain disulfides connect Cys-299-Cys-308, Cys-301-Cys-319, Cys-321-Cys-330, Cys-333-Cys-353, Cys-356-Cys-365, Cys-358-Cys-390, Cys-393-Cys-402, Cys-405-Cys-423, Cys-426-Cys-436, Cys-428-Cys-443, Cys-445-Cys-454, Cys-457-Cys-467, Cys-491-Cys-503, Cys-493-Cys-509, Cys-511-Cys-520, Cys-523-Cys-533, Cys-536-Cys-548, Cys-538-Cys-555, Cys-557-Cys-566, Cys-569-Cys-586, Cys-601-Cys-610, Cys-613-Cys-628, Cys-631-Cys-645, Cys-633-Cys-652, Cys-654-Cys-663, Cys-666-Cys-681, Cys-684-Cys-696, Cys-686-Cys-703, and Cys-705-Cys-714. 8 consecutive Laminin EGF-like domains span residues 299-355 (CVCN…ECEA), 356-425 (CNCH…GCIP), 426-469 (CSCD…FCLR), 491-535 (CDCN…ICQA), 536-588 (CWCS…ACDP), 590-630 (GTIN…GCSE), 631-683 (CKCH…GCQG), and 684-728 (CQCD…DLHH). The domain IV 1 (domain IV B) stretch occupies residues 796–1265 (TEAVSGHITI…VAFYHKGALP (470 aa)). Disulfide bonds link Cys-1266-Cys-1278, Cys-1268-Cys-1285, Cys-1287-Cys-1296, Cys-1299-Cys-1309, Cys-1312-Cys-1319, Cys-1314-Cys-1326, Cys-1328-Cys-1337, Cys-1340-Cys-1353, Cys-1356-Cys-1371, Cys-1358-Cys-1378, Cys-1380-Cys-1389, Cys-1392-Cys-1402, Cys-1405-Cys-1417, Cys-1407-Cys-1424, Cys-1426-Cys-1435, and Cys-1438-Cys-1453. Laminin EGF-like domains lie at 1266–1311 (CECH…RCKP), 1312–1355 (CSCG…GCEG), 1356–1404 (CNCS…ECVP), and 1405–1455 (CNCN…GCTS). The segment at 1266–1465 (CECHPTGATG…CFCFGVNNQC (200 aa)) is domain III B. The 178-residue stretch at 1476-1653 (VDMLGWHLET…SGRIALAVEI (178 aa)) folds into the Laminin IV type A domain. The tract at residues 1654-1821 (CACPPAYAGD…DSSPAEECDD (168 aa)) is domain III A. 8 disulfide bridges follow: Cys-1687–Cys-1696, Cys-1689–Cys-1703, Cys-1706–Cys-1715, Cys-1718–Cys-1731, Cys-1734–Cys-1746, Cys-1736–Cys-1755, Cys-1757–Cys-1766, and Cys-1769–Cys-1784. Laminin EGF-like domains are found at residues 1687–1733 (CNCN…SCRA) and 1734–1786 (CPCP…SCQP). One can recognise a Laminin EGF-like 15; truncated domain in the interval 1787–1821 (CSCNSNGQLGSCHPLTGDCINQEPKDSSPAEECDD). Residues 1822–2389 (CDSCVMTLLN…ARDAASKVAV (568 aa)) are domain II and I. Coiled-coil stretches lie at residues 1852-1941 (ASAG…KNVI) and 1987-2169 (KHLR…DELV). A Cell attachment site motif is present at residues 2278-2280 (RGD). Residues 2322–2388 (RTQNEDFKKA…QARDAASKVA (67 aa)) are a coiled coil. N-linked (GlcNAc...) asparagine glycosylation is found at Asn-2365, Asn-2502, and Asn-2584. 5 Laminin G-like domains span residues 2390–2591 (PMRF…VEPC), 2598–2760 (SDKN…TKKC), 2767–2927 (VRSA…LGGC), 2986–3150 (ALQF…VSSC), and 3157–3330 (KGIY…LNGC). Disulfide bonds link Cys-2561/Cys-2591, Cys-2737/Cys-2760, Cys-2895/Cys-2927, Cys-3127/Cys-3150, and Cys-3302/Cys-3330.

As to quaternary structure, laminin is a complex glycoprotein, consisting of three different polypeptide chains (alpha, beta, gamma), which are bound to each other by disulfide bonds into a cross-shaped molecule comprising one long and three short arms with globules at each end. Alpha-3 is a subunit of laminin-5 (laminin-332 or epiligrin/kalinin/nicein), laminin-6 (laminin-311 or K-laminin) and laminin-7 (laminin-321 or KS-laminin). As to expression, skin; respiratory, urinary, and digestive epithelia and in other specialized tissues with prominent secretory or protective functions. Epithelial basement membrane, and epithelial cell tongue that migrates into a wound bed. A differential and focal expression of the subunit alpha-3 is observed in the CNS.

It is found in the secreted. The protein localises to the extracellular space. It localises to the extracellular matrix. Its subcellular location is the basement membrane. Functionally, binding to cells via a high affinity receptor, laminin is thought to mediate the attachment, migration and organization of cells into tissues during embryonic development by interacting with other extracellular matrix components. In terms of biological role, laminin-5 is thought to be involved in (1) cell adhesion via integrin alpha-3/beta-1 in focal adhesion and integrin alpha-6/beta-4 in hemidesmosomes, (2) signal transduction via tyrosine phosphorylation of pp125-FAK and p80, (3) differentiation of keratinocytes. The chain is Laminin subunit alpha-3 (LAMA3) from Homo sapiens (Human).